The chain runs to 165 residues: Lipoprotein signal peptidase (165 aa).

The next 3 membrane-spanning stretches (helical) occupy residues 9–29 (LLTI…VLLY), 69–89 (KYFL…FLFL), and 100–120 (FSLI…FFYN). Catalysis depends on residues Asp124 and Asp142. Residues 133 to 153 (WSFPTFNFADIFISLGTLIFV) traverse the membrane as a helical segment.

The protein belongs to the peptidase A8 family.

It is found in the cell inner membrane. The catalysed reaction is Release of signal peptides from bacterial membrane prolipoproteins. Hydrolyzes -Xaa-Yaa-Zaa-|-(S,diacylglyceryl)Cys-, in which Xaa is hydrophobic (preferably Leu), and Yaa (Ala or Ser) and Zaa (Gly or Ala) have small, neutral side chains.. Its pathway is protein modification; lipoprotein biosynthesis (signal peptide cleavage). Functionally, this protein specifically catalyzes the removal of signal peptides from prolipoproteins. The protein is Lipoprotein signal peptidase of Chlamydia felis (strain Fe/C-56) (Chlamydophila felis).